The following is a 239-amino-acid chain: Large ribosomal subunit protein bL25 (239 aa).

A disordered region spans residues 217 to 239; sequence IKAEAHAAEGTQAEGSTEEGQQQ. Residues 229–239 show a composition bias toward polar residues; sequence AEGSTEEGQQQ.

Belongs to the bacterial ribosomal protein bL25 family. CTC subfamily. As to quaternary structure, part of the 50S ribosomal subunit; part of the 5S rRNA/L5/L18/L25 subcomplex. Contacts the 5S rRNA. Binds to the 5S rRNA independently of L5 and L18.

Its function is as follows. This is one of the proteins that binds to the 5S RNA in the ribosome where it forms part of the central protuberance. The polypeptide is Large ribosomal subunit protein bL25 (Deinococcus deserti (strain DSM 17065 / CIP 109153 / LMG 22923 / VCD115)).